A 294-amino-acid polypeptide reads, in one-letter code: NADH-cytochrome b5 reductase 1 (294 aa).

Residues 18–38 form a helical membrane-spanning segment; the sequence is PFIVFATVATIISAFIGYYFL. Residues 51-154 enclose the FAD-binding FR-type domain; it reads DEFQKFPLIE…RGPKGFFTYT (104 aa). FAD-binding positions include 134-149 and 160-192; these read AGKN…GPKG and SFGM…KIHL.

The protein belongs to the flavoprotein pyridine nucleotide cytochrome reductase family. Monomer. Component of the 2-(3-amino-3-carboxypropyl)histidine synthase complex composed of DPH1, DPH2, DPH3 and a NADH-dependent reductase, predominantly CBR1. FAD is required as a cofactor.

The protein localises to the mitochondrion outer membrane. It catalyses the reaction 2 Fe(III)-[cytochrome b5] + NADH = 2 Fe(II)-[cytochrome b5] + NAD(+) + H(+). The enzyme catalyses 2 Fe(3+)-[Dph3] + NADH = 2 Fe(2+)-[Dph3] + NAD(+) + H(+). It participates in protein modification; peptidyl-diphthamide biosynthesis. Functionally, NADH-dependent reductase for DPH3 and cytochrome b5. Required for the first step of diphthamide biosynthesis, a post-translational modification of histidine which occurs in elongation factor 2. DPH1 and DPH2 transfer a 3-amino-3-carboxypropyl (ACP) group from S-adenosyl-L-methionine (SAM) to a histidine residue, the reaction is assisted by a reduction system comprising DPH3 and a NADH-dependent reductase, predominantly CBR1. By reducing DPH3, also involved in the formation of the tRNA wobble base modification mcm5s 2U (5-methoxycarbonylmethyl-2-thiouridine), mediated by the elongator complex. The cytochrome b5/NADH cytochrome b5 reductase electron transfer system supports the catalytic activity of several sterol biosynthetic enzymes. This Candida albicans (strain SC5314 / ATCC MYA-2876) (Yeast) protein is NADH-cytochrome b5 reductase 1 (CBR1).